Consider the following 539-residue polypeptide: MAKDLKFSEDARQAMLRGVDKLANAVKVTIGPKGRNVVLDKDYTTPLITNDGVTIAKEIELEDPYENMGAKLVQEVANKTNEIAGDGTTTATVLAQSMIQEGLKNVTSGANPVGLRQGIDKAVQVAIEALHEISQKVENKNEIAQVGAISAADEEIGRYISEAMDKVGNDGVITIEESNGFNTELEVVEGMQFDRGYQSPYMVTDSDKMIAELERPYILVTDKKISSFQDILPLLEQVVQASRPILIVADEVEGDALTNIVLNRMRGTFTAVAVKAPGFGDRRKAMLEDLAILTGAQVITDDLGLELKDASLDMLGTANKVEVTKDHTTVVDGNGDENNIDARVGQIKAQIEETDSEFDKEKLQERLAKLAGGVAVIKVGAASETELKERKLRIEDALNSTRAAVEEGIVAGGGTALVNIYQKVSEIKAEGDVETGVNIVLKALQAPVRQIAENAGLEGSIIVERLKHAEAGVGFNAATNEWVNMLEEGIVDPTKVTRSALQHAASVAAMFLTTEAVVASIPEPENNEQPGMGGMPGMM.

Residues 29–32, 86–90, Gly413, 476–478, and Asp492 contribute to the ATP site; these read TIGP, DGTTT, and NAA.

This sequence belongs to the chaperonin (HSP60) family. As to quaternary structure, forms a cylinder of 14 subunits composed of two heptameric rings stacked back-to-back. Interacts with the co-chaperonin GroES.

The protein localises to the cytoplasm. The enzyme catalyses ATP + H2O + a folded polypeptide = ADP + phosphate + an unfolded polypeptide.. Its function is as follows. Together with its co-chaperonin GroES, plays an essential role in assisting protein folding. The GroEL-GroES system forms a nano-cage that allows encapsulation of the non-native substrate proteins and provides a physical environment optimized to promote and accelerate protein folding. The chain is Chaperonin GroEL from Staphylococcus epidermidis (strain ATCC 12228 / FDA PCI 1200).